The chain runs to 300 residues: F-box associated domain-containing protein sdz-33 (300 aa).

Residues 5 to 51 form the F-box domain; that stretch reads PFPILCLPDFVLQKSLKLMGVVEHLCLSILSKNIKQLIATLKGYPKC.

Expressed in D-type motor neuron cell bodies.

Functionally, substrate recognition component of E3 ubiquitin-protein ligase complex which mediates the ubiquitination and subsequent proteasomal degradation of target proteins such as mdl-1. Positively regulates axon regeneration by targeting mdl-1 for ubiquitin-mediated degradation; probably thereby reducing levels of mdl-1-mxl-1 heterodimers, allowing free mxl-1 to form complexes with tdpt-1 and thus inhibiting tdpt-1-dependent sumoylation of ets-4. The protein is F-box associated domain-containing protein sdz-33 of Caenorhabditis elegans.